Here is a 399-residue protein sequence, read N- to C-terminus: Semaphorin-like protein 139 (399 aa).

Residues 1-14 (MIPLLFILFYFTNC) form the signal peptide. One can recognise a Sema domain in the interval 15-399 (IEWHKFETSE…IPRMKKILKM (385 aa)).

This sequence belongs to the semaphorin family. In terms of assembly, interacts with host VESPR.

Its subcellular location is the secreted. Functionally, acts as a semaphorin-like protein and binds to host plexin C1 receptor. May alter the movement of plexin C1-expressing cells including dendritic cells, monocytes, or granulocytes in the proximity of infected cells. May also regulate host cell cytoskeleton of neighboring cells to improve viral infection. This is Semaphorin-like protein 139 (EVM139) from Ectromelia virus (strain Moscow) (ECTV).